We begin with the raw amino-acid sequence, 331 residues long: Ribosomal RNA small subunit methyltransferase H (331 aa).

S-adenosyl-L-methionine contacts are provided by residues 38-40, D56, F83, D100, and Q107; that span reads GGY. The interval 308–331 is disordered; it reads TDAPAGPVDPQVLGMPLIPKKGRR.

This sequence belongs to the methyltransferase superfamily. RsmH family.

The protein resides in the cytoplasm. It carries out the reaction cytidine(1402) in 16S rRNA + S-adenosyl-L-methionine = N(4)-methylcytidine(1402) in 16S rRNA + S-adenosyl-L-homocysteine + H(+). Its function is as follows. Specifically methylates the N4 position of cytidine in position 1402 (C1402) of 16S rRNA. This chain is Ribosomal RNA small subunit methyltransferase H, found in Cereibacter sphaeroides (strain ATCC 17025 / ATH 2.4.3) (Rhodobacter sphaeroides).